Here is a 340-residue protein sequence, read N- to C-terminus: HPr kinase/phosphorylase (340 aa).

Active-site residues include His153 and Lys174. 168 to 175 (GRSGIGKS) serves as a coordination point for ATP. Mg(2+) is bound at residue Ser175. Residue Asp192 is the Proton acceptor; for phosphorylation activity. Proton donor; for dephosphorylation activity of the active site. Residues 216-225 (MEIRGLGIID) are important for the catalytic mechanism of both phosphorylation and dephosphorylation. Glu217 contributes to the Mg(2+) binding site. Arg258 is a catalytic residue. The interval 279–284 (PIYPGK) is important for the catalytic mechanism of dephosphorylation.

This sequence belongs to the HPrK/P family. In terms of assembly, homohexamer. Requires Mg(2+) as cofactor.

It carries out the reaction [HPr protein]-L-serine + ATP = [HPr protein]-O-phospho-L-serine + ADP + H(+). The enzyme catalyses [HPr protein]-O-phospho-L-serine + phosphate + H(+) = [HPr protein]-L-serine + diphosphate. Functionally, catalyzes the ATP- as well as the pyrophosphate-dependent phosphorylation of a specific serine residue in HPr, a phosphocarrier protein of the phosphoenolpyruvate-dependent sugar phosphotransferase system (PTS). HprK/P also catalyzes the pyrophosphate-producing, inorganic phosphate-dependent dephosphorylation (phosphorolysis) of seryl-phosphorylated HPr (P-Ser-HPr). This is HPr kinase/phosphorylase from Chloroherpeton thalassium (strain ATCC 35110 / GB-78).